The primary structure comprises 303 residues: Cytoplasmic envelopment protein 1 (303 aa).

This sequence belongs to the herpesviridae cytoplasmic envelopment protein 1 family.

It is found in the virion. It localises to the virion tegument. Its subcellular location is the host cytoplasm. The protein resides in the host Golgi apparatus. Its function is as follows. Plays a critical role in cytoplasmic virus egress. Participates in the final step of tegumentation and envelope acquisition within the host cytoplasm. This chain is Cytoplasmic envelopment protein 1, found in Equine herpesvirus 1 (strain Ab4p) (EHV-1).